The chain runs to 716 residues: Putative mannosyltransferase YkcB (716 aa).

8 helical membrane passes run 8 to 28 (LDIVLLLILLASAFLNIYNIW), 44 to 64 (MMQSFHNFFYASFDAAGFITV), 87 to 107 (SVILPQALAGVGSVLLMYLLI), 118 to 135 (IASFVMACTPIAVAVART), 137 to 157 (NVDALLVFFLLLATWLLFKAI), 159 to 179 (KGKLIWLLAAFFVVGVGFNTK), 180 to 200 (MLQAYMILPAFLLFYLIAANA), and 206 to 226 (IVSLVSALAVLAAVSLSWPLI). The tract at residues 260–363 (TGQNSGGGQG…GSGMFGTGTP (104 aa)) is disordered. Polar residues predominate over residues 278–289 (EMSSSDNTQAPP). Residues 290 to 307 (NQSSSNSSSSDGKSSNGN) show a composition bias toward low complexity. A compositionally biased stretch (gly residues) spans 318 to 347 (PSGGQGGPPSGGDGGQGGPGGDGGKGGTGT). A run of 6 helical transmembrane segments spans residues 376–396 (QISWLLPFAIFGIAGLLIAGA), 409–429 (TVFWVAWLVPIAGFFSVAEFF), 433–453 (YLIMLAPPIAALVGAGWVALV), 462–482 (WKAWLLPGAIIATTGFELFIL), 491–511 (VGWSIGVGVIGVLSAIALLLF), and 518–538 (FSYYVSLAALLALLVMPMYWA). The tract at residues 664 to 716 (VASEKWQSSSDQKTENTDSADTSSSKASGENGKMGGPGGMNQSATLYELHADE) is disordered. Positions 680–694 (TDSADTSSSKASGEN) are enriched in low complexity.

The protein belongs to the glycosyltransferase 39 family.

Its subcellular location is the cell membrane. The protein is Putative mannosyltransferase YkcB (ykcB) of Bacillus subtilis (strain 168).